We begin with the raw amino-acid sequence, 171 residues long: Ribosome maturation factor RimM (171 aa).

The PRC barrel domain occupies 97 to 169 (DGEFYYHEII…RVDVDIMEGL (73 aa)).

The protein belongs to the RimM family. As to quaternary structure, binds ribosomal protein uS19.

The protein localises to the cytoplasm. Its function is as follows. An accessory protein needed during the final step in the assembly of 30S ribosomal subunit, possibly for assembly of the head region. Essential for efficient processing of 16S rRNA. May be needed both before and after RbfA during the maturation of 16S rRNA. It has affinity for free ribosomal 30S subunits but not for 70S ribosomes. This is Ribosome maturation factor RimM from Lactococcus lactis subsp. cremoris (strain SK11).